The primary structure comprises 396 residues: 8-amino-7-oxononanoate synthase (396 aa).

Arg-19 lines the substrate pocket. Pyridoxal 5'-phosphate is bound at residue 106 to 107 (GY). A substrate-binding site is contributed by His-131. Residues Ser-176, His-204, and Thr-233 each coordinate pyridoxal 5'-phosphate. An N6-(pyridoxal phosphate)lysine modification is found at Lys-236. Residue Thr-350 coordinates substrate.

Belongs to the class-II pyridoxal-phosphate-dependent aminotransferase family. BioF subfamily. Homodimer. Requires pyridoxal 5'-phosphate as cofactor.

The enzyme catalyses 6-carboxyhexanoyl-[ACP] + L-alanine + H(+) = (8S)-8-amino-7-oxononanoate + holo-[ACP] + CO2. It functions in the pathway cofactor biosynthesis; biotin biosynthesis. Functionally, catalyzes the decarboxylative condensation of pimeloyl-[acyl-carrier protein] and L-alanine to produce 8-amino-7-oxononanoate (AON), [acyl-carrier protein], and carbon dioxide. The chain is 8-amino-7-oxononanoate synthase from Pseudomonas syringae pv. tomato (strain ATCC BAA-871 / DC3000).